Reading from the N-terminus, the 613-residue chain is Dihydroxy-acid dehydratase (613 aa).

Asp-81 lines the Mg(2+) pocket. Cys-122 lines the [2Fe-2S] cluster pocket. Mg(2+) contacts are provided by Asp-123 and Lys-124. Lys-124 carries the N6-carboxylysine modification. Cys-195 contacts [2Fe-2S] cluster. Glu-491 contacts Mg(2+). The active-site Proton acceptor is the Ser-517.

This sequence belongs to the IlvD/Edd family. In terms of assembly, homodimer. [2Fe-2S] cluster is required as a cofactor. Requires Mg(2+) as cofactor.

The catalysed reaction is (2R)-2,3-dihydroxy-3-methylbutanoate = 3-methyl-2-oxobutanoate + H2O. It catalyses the reaction (2R,3R)-2,3-dihydroxy-3-methylpentanoate = (S)-3-methyl-2-oxopentanoate + H2O. It functions in the pathway amino-acid biosynthesis; L-isoleucine biosynthesis; L-isoleucine from 2-oxobutanoate: step 3/4. The protein operates within amino-acid biosynthesis; L-valine biosynthesis; L-valine from pyruvate: step 3/4. Its function is as follows. Functions in the biosynthesis of branched-chain amino acids. Catalyzes the dehydration of (2R,3R)-2,3-dihydroxy-3-methylpentanoate (2,3-dihydroxy-3-methylvalerate) into 2-oxo-3-methylpentanoate (2-oxo-3-methylvalerate) and of (2R)-2,3-dihydroxy-3-methylbutanoate (2,3-dihydroxyisovalerate) into 2-oxo-3-methylbutanoate (2-oxoisovalerate), the penultimate precursor to L-isoleucine and L-valine, respectively. The chain is Dihydroxy-acid dehydratase from Vibrio vulnificus (strain YJ016).